The sequence spans 220 residues: Glycerol-3-phosphate acyltransferase (220 aa).

5 consecutive transmembrane segments (helical) span residues L4–V24, V53–A73, P80–F100, M116–V136, and G138–I158. A disordered region spans residues W193–K220. Positions V210–K220 are enriched in basic and acidic residues.

Belongs to the PlsY family. In terms of assembly, probably interacts with PlsX.

Its subcellular location is the cell inner membrane. It catalyses the reaction an acyl phosphate + sn-glycerol 3-phosphate = a 1-acyl-sn-glycero-3-phosphate + phosphate. The protein operates within lipid metabolism; phospholipid metabolism. Its function is as follows. Catalyzes the transfer of an acyl group from acyl-phosphate (acyl-PO(4)) to glycerol-3-phosphate (G3P) to form lysophosphatidic acid (LPA). This enzyme utilizes acyl-phosphate as fatty acyl donor, but not acyl-CoA or acyl-ACP. The protein is Glycerol-3-phosphate acyltransferase of Aeromonas salmonicida (strain A449).